A 158-amino-acid polypeptide reads, in one-letter code: Cyclic pyranopterin monophosphate synthase (158 aa).

Residues 76–78 (LCH) and 114–115 (ME) each bind substrate. Asp129 is an active-site residue.

It belongs to the MoaC family. Homohexamer; trimer of dimers.

It carries out the reaction (8S)-3',8-cyclo-7,8-dihydroguanosine 5'-triphosphate = cyclic pyranopterin phosphate + diphosphate. The protein operates within cofactor biosynthesis; molybdopterin biosynthesis. Its function is as follows. Catalyzes the conversion of (8S)-3',8-cyclo-7,8-dihydroguanosine 5'-triphosphate to cyclic pyranopterin monophosphate (cPMP). The sequence is that of Cyclic pyranopterin monophosphate synthase from Brucella anthropi (strain ATCC 49188 / DSM 6882 / CCUG 24695 / JCM 21032 / LMG 3331 / NBRC 15819 / NCTC 12168 / Alc 37) (Ochrobactrum anthropi).